The following is an 85-amino-acid chain: Small ribosomal subunit protein uS17 (85 aa).

Belongs to the universal ribosomal protein uS17 family. In terms of assembly, part of the 30S ribosomal subunit.

Functionally, one of the primary rRNA binding proteins, it binds specifically to the 5'-end of 16S ribosomal RNA. The chain is Small ribosomal subunit protein uS17 from Desulforapulum autotrophicum (strain ATCC 43914 / DSM 3382 / VKM B-1955 / HRM2) (Desulfobacterium autotrophicum).